Here is a 460-residue protein sequence, read N- to C-terminus: Chromosomal replication initiator protein DnaA (460 aa).

The interval 1–84 is domain I, interacts with DnaA modulators; the sequence is MAVSLWQQCI…RFDIGSRPSA (84 aa). The interval 84 to 123 is domain II; it reads AKKPEPAPVAAVRVPNPQTKASVGTSFNTTEPVANANHRS. The tract at residues 124–340 is domain III, AAA+ region; sequence NINPTYQFDN…GALNRVIANA (217 aa). 4 residues coordinate ATP: Gly168, Gly170, Lys171, and Thr172. The segment at 341–460 is domain IV, binds dsDNA; the sequence is NFTGRPITID…YANLIRTLSS (120 aa).

Belongs to the DnaA family. In terms of assembly, oligomerizes as a right-handed, spiral filament on DNA at oriC.

It localises to the cytoplasm. Functionally, plays an essential role in the initiation and regulation of chromosomal replication. ATP-DnaA binds to the origin of replication (oriC) to initiate formation of the DNA replication initiation complex once per cell cycle. Binds the DnaA box (a 9 base pair repeat at the origin) and separates the double-stranded (ds)DNA. Forms a right-handed helical filament on oriC DNA; dsDNA binds to the exterior of the filament while single-stranded (ss)DNA is stabiized in the filament's interior. The ATP-DnaA-oriC complex binds and stabilizes one strand of the AT-rich DNA unwinding element (DUE), permitting loading of DNA polymerase. After initiation quickly degrades to an ADP-DnaA complex that is not apt for DNA replication. Binds acidic phospholipids. This Shewanella sp. (strain ANA-3) protein is Chromosomal replication initiator protein DnaA.